A 366-amino-acid chain; its full sequence is MSEDSNPKNDLKLKMYETFRSHIERAENSFWTYMLFYLQFLVGINGAVGILCRYLSNNLQNFPTEIIIAFLALVNILLSLIGIIVIIERGKWFFRNMILTVNLERYILKEEHIKIIPKRYSKFDNFNKVIDTTGRIFISIFIGIYMISVIALGYLANSCKTIILFGTGFFIIVVIIYFLDLLDWIYRRIDSNEYRKVIGVVLFISFIPPLMNYFIYDIINLICSYIPESFIVAMIVILIFVIIDVYYNAKKHIENTIIMLSLERTVNDIDDIIKILKNIRLDDTKKEELKKKLRKIKKLIENVIKLLGGTSENGTQNNNLEEAKSKITEACRKISGNNIFEAINELNEAKYIINNKINELTQSDSS.

The next 6 membrane-spanning stretches (helical) occupy residues 30–50, 66–86, 136–156, 162–182, 198–218, and 225–245; these read FWTYMLFYLQFLVGINGAVGI, IIIAFLALVNILLSLIGIIVI, IFISIFIGIYMISVIALGYLA, IILFGTGFFIIVVIIYFLDLL, IGVVLFISFIPPLMNYFIYDI, and YIPESFIVAMIVILIFVIIDV.

The protein resides in the cell membrane. This is an uncharacterized protein from Methanocaldococcus jannaschii (strain ATCC 43067 / DSM 2661 / JAL-1 / JCM 10045 / NBRC 100440) (Methanococcus jannaschii).